A 164-amino-acid chain; its full sequence is Lipoprotein signal peptidase (164 aa).

Helical transmembrane passes span 12–32, 70–90, and 102–122; these read WLWL…LILQ, WFFA…MYRS, and ALII…GFVV. Active-site residues include D123 and D141. Residues 137–157 traverse the membrane as a helical segment; sequence FNLADTAICVGAALIVLEGFL.

Belongs to the peptidase A8 family.

The protein resides in the cell inner membrane. It catalyses the reaction Release of signal peptides from bacterial membrane prolipoproteins. Hydrolyzes -Xaa-Yaa-Zaa-|-(S,diacylglyceryl)Cys-, in which Xaa is hydrophobic (preferably Leu), and Yaa (Ala or Ser) and Zaa (Gly or Ala) have small, neutral side chains.. Its pathway is protein modification; lipoprotein biosynthesis (signal peptide cleavage). This protein specifically catalyzes the removal of signal peptides from prolipoproteins. The chain is Lipoprotein signal peptidase from Escherichia coli O6:K15:H31 (strain 536 / UPEC).